The following is a 491-amino-acid chain: Lysine--tRNA ligase (491 aa).

E398 and E405 together coordinate Mg(2+).

Belongs to the class-II aminoacyl-tRNA synthetase family. In terms of assembly, homodimer. It depends on Mg(2+) as a cofactor.

Its subcellular location is the cytoplasm. The enzyme catalyses tRNA(Lys) + L-lysine + ATP = L-lysyl-tRNA(Lys) + AMP + diphosphate. The polypeptide is Lysine--tRNA ligase (Mycoplasmopsis synoviae (strain 53) (Mycoplasma synoviae)).